Consider the following 294-residue polypeptide: Large ribosomal subunit protein uL2 (294 aa).

Disordered regions lie at residues 1 to 37 (MGIR…RPEK) and 228 to 294 (GSVM…RAAQ). The span at 10–22 (TPSTRHMTVSNFE) shows a compositional bias: polar residues. Over residues 23–37 (ELSRDENGKRPRPEK) the composition is skewed to basic and acidic residues. Residues 264 to 285 (KTRKRNKPSNKFIVRGRRRGGR) show a composition bias toward basic residues.

The protein belongs to the universal ribosomal protein uL2 family. Part of the 50S ribosomal subunit. Forms a bridge to the 30S subunit in the 70S ribosome.

One of the primary rRNA binding proteins. Required for association of the 30S and 50S subunits to form the 70S ribosome, for tRNA binding and peptide bond formation. It has been suggested to have peptidyltransferase activity; this is somewhat controversial. Makes several contacts with the 16S rRNA in the 70S ribosome. The sequence is that of Large ribosomal subunit protein uL2 from Synechococcus sp. (strain JA-3-3Ab) (Cyanobacteria bacterium Yellowstone A-Prime).